The following is a 384-amino-acid chain: S-adenosylmethionine synthase (384 aa).

Histidine 15 is an ATP binding site. Aspartate 17 provides a ligand contact to Mg(2+). Glutamate 43 serves as a coordination point for K(+). The L-methionine site is built by glutamate 56 and glutamine 99. A flexible loop region spans residues 99–109 (QSSDINQGVDR). ATP is bound by residues 164 to 166 (DAK), 230 to 231 (RF), aspartate 239, 245 to 246 (RK), alanine 262, and lysine 266. Aspartate 239 is an L-methionine binding site. Lysine 270 is an L-methionine binding site.

It belongs to the AdoMet synthase family. As to quaternary structure, homotetramer; dimer of dimers. Mg(2+) serves as cofactor. Requires K(+) as cofactor.

It is found in the cytoplasm. It carries out the reaction L-methionine + ATP + H2O = S-adenosyl-L-methionine + phosphate + diphosphate. It participates in amino-acid biosynthesis; S-adenosyl-L-methionine biosynthesis; S-adenosyl-L-methionine from L-methionine: step 1/1. In terms of biological role, catalyzes the formation of S-adenosylmethionine (AdoMet) from methionine and ATP. The overall synthetic reaction is composed of two sequential steps, AdoMet formation and the subsequent tripolyphosphate hydrolysis which occurs prior to release of AdoMet from the enzyme. This is S-adenosylmethionine synthase from Histophilus somni (strain 129Pt) (Haemophilus somnus).